The primary structure comprises 144 residues: Pleckstrin homology-like domain family A member 2 (144 aa).

Residues 18–111 enclose the PH domain; the sequence is ILCEGELEKR…AAITMALIDF (94 aa). Serine 140 carries the phosphoserine modification.

This sequence belongs to the PHLDA2 family. Specifically expressed at high levels in extraembryonic tissues in the developing conceptus (at protein level). Expressed in placenta and yolc sac. Expressed at low levels in fetal liver and kidney.

It localises to the cytoplasm. The protein resides in the membrane. Its function is as follows. Plays a role in regulating placenta growth. May act via its PH domain that competes with other PH domain-containing proteins, thereby preventing their binding to membrane lipids. This is Pleckstrin homology-like domain family A member 2 (Phlda2) from Mus musculus (Mouse).